Reading from the N-terminus, the 2395-residue chain is Helicase ssl-1 (2395 aa).

The span at 1–12 (MPATPVRASSTR) shows a compositional bias: low complexity. Positions 1–62 (MPATPVRASS…EKKKKKTSDD (62 aa)) are disordered. The HSA domain maps to 227 to 300 (LPKCVEPERN…IKEKRKMCAG (74 aa)). A compositionally biased stretch (polar residues) spans 354 to 363 (LVSSSKSPSI). 2 disordered regions span residues 354-404 (LVSS…VRQE) and 444-504 (EKLE…HGVL). Basic and acidic residues-rich tracts occupy residues 365–375 (SDRDDKDEEFK), 394–404 (KSQKKEDVRQE), and 444–462 (EKLE…NEEK). Residues 388–464 (TIANAEKSQK…ACGDNEEKME (77 aa)) are a coiled coil. Polar residues predominate over residues 470 to 490 (SSDAQKPSTSSSDLTAEQLQD). In terms of domain architecture, Helicase ATP-binding spans 570–735 (VTLYEKNLNG…WSLMHFLMPT (166 aa)). Residue 583–590 (DEMGLGKT) participates in ATP binding. The tract at residues 963–982 (AQPLQNGNSIPQNAPNRPQT) is disordered. The Helicase C-terminal domain occupies 1196–1342 (LLRQLYLYKH…ELAIDEAGFT (147 aa)). Positions 1452–1476 (KPEFEEECKEAEALIDQKREEWDKN) form a coiled coil. Disordered regions lie at residues 1615–1706 (ESAA…EEPD), 1977–2073 (SIQH…RRNA), 2092–2143 (QSGK…PQQR), 2276–2306 (QMRS…RPLV), and 2350–2395 (MQMP…PPQN). Low complexity-rich tracts occupy residues 1647-1669 (QQPT…QQQQ) and 1981-1995 (LQSS…QNLQ). A compositionally biased stretch (polar residues) spans 1996 to 2019 (NSHNSEQRNNVQNMHQNQYNSSQN). Composition is skewed to low complexity over residues 2051–2073 (LVQQ…RRNA) and 2092–2114 (QSGK…SSND). Over residues 2115 to 2129 (GQGGASTVGGGGGGS) the composition is skewed to gly residues. The segment covering 2130–2142 (QQPHQQQQQQPQQ) has biased composition (low complexity). A compositionally biased stretch (gly residues) spans 2281–2299 (NGGGVGGQGGLQGGPGGPQ). Residues 2361 to 2377 (QQQAPPQSSQQASQQAP) are compositionally biased toward low complexity.

The protein belongs to the SNF2/RAD54 helicase family. SWR1 subfamily.

The protein localises to the nucleus. Functionally, probable catalytic component of a chromatin-remodeling complex which mediates the ATP-dependent exchange of histone H2A variant H2AV/htz-1 for H2A, leading to transcriptional regulation of selected genes by chromatin remodeling. Involved in foregut development, and may be involved in vulval development. The polypeptide is Helicase ssl-1 (ssl-1) (Caenorhabditis elegans).